A 130-amino-acid polypeptide reads, in one-letter code: MAQVQYYGTGRRKSSVARVRLVPGEGRIIVNNREISEHIPSAALIEDIKQPLTLTETAGTYDVLVNVHGGGFSGQAGAIRHGIARALLEADPEYRSTLKRAGLLTRDARMKERKKYGLKGARRAPQFSKR.

Belongs to the universal ribosomal protein uS9 family.

The chain is Small ribosomal subunit protein uS9 from Bacillus licheniformis (strain ATCC 14580 / DSM 13 / JCM 2505 / CCUG 7422 / NBRC 12200 / NCIMB 9375 / NCTC 10341 / NRRL NRS-1264 / Gibson 46).